The following is a 651-amino-acid chain: p-hydroxybenzoic acid efflux pump subunit AaeB (651 aa).

The next 11 membrane-spanning stretches (helical) occupy residues 11–31 (FAFK…HLQL), 41–61 (AAIV…SGAI), 67–87 (LRII…VLTI), 91–111 (VLTL…SSLV), 119–139 (FGLA…TPLL), 150–170 (EIVL…PRSI), 368–388 (LFWL…IAVV), 405–425 (FLLG…FIIP), 429–449 (QSML…GIEV), 460–480 (LAST…VSLF), and 481–501 (LDSA…LLLI).

Belongs to the aromatic acid exporter ArAE (TC 2.A.85) family.

It is found in the cell inner membrane. In terms of biological role, forms an efflux pump with AaeA. Could function as a metabolic relief valve, allowing to eliminate certain compounds when they accumulate to high levels in the cell. This Yersinia enterocolitica serotype O:8 / biotype 1B (strain NCTC 13174 / 8081) protein is p-hydroxybenzoic acid efflux pump subunit AaeB.